We begin with the raw amino-acid sequence, 452 residues long: uncharacterized protein (452 aa).

The disordered stretch occupies residues 1–452 (MTAVSSNRNP…LRKPEADTAL (452 aa)). Polar residues-rich tracts occupy residues 29 to 41 (RTGT…VSSN), 95 to 111 (SPQT…SNRN), 129 to 144 (SPQT…SSNR), and 163 to 176 (SPQT…AVSS). Residues 177–193 (NRDHEDDGCLLKQESRG) are compositionally biased toward basic and acidic residues. 7 stretches are compositionally biased toward polar residues: residues 197–212 (SPQT…SSNR), 231–245 (SPQT…VSSN), 265–280 (SPQT…SSNR), 299–314 (SPQT…SSNR), 333–347 (SPQT…VSSK), 376–394 (TAVS…SNRN), and 412–426 (SPQT…VSSN). Residues 439-452 (EPQELRKPEADTAL) show a composition bias toward basic and acidic residues.

This is an uncharacterized protein from Homo sapiens (Human).